A 262-amino-acid chain; its full sequence is Tryptophan synthase alpha chain (262 aa).

Active-site proton acceptor residues include E49 and D60.

It belongs to the TrpA family. In terms of assembly, tetramer of two alpha and two beta chains.

The catalysed reaction is (1S,2R)-1-C-(indol-3-yl)glycerol 3-phosphate + L-serine = D-glyceraldehyde 3-phosphate + L-tryptophan + H2O. Its pathway is amino-acid biosynthesis; L-tryptophan biosynthesis; L-tryptophan from chorismate: step 5/5. Its function is as follows. The alpha subunit is responsible for the aldol cleavage of indoleglycerol phosphate to indole and glyceraldehyde 3-phosphate. This is Tryptophan synthase alpha chain from Caldanaerobacter subterraneus subsp. tengcongensis (strain DSM 15242 / JCM 11007 / NBRC 100824 / MB4) (Thermoanaerobacter tengcongensis).